A 146-amino-acid polypeptide reads, in one-letter code: Tol-Pal system protein TolR (146 aa).

The chain crosses the membrane as a helical span at residues 16–36 (VVPYIDVMLVLLVIFMVTAPM).

Belongs to the ExbD/TolR family. The Tol-Pal system is composed of five core proteins: the inner membrane proteins TolA, TolQ and TolR, the periplasmic protein TolB and the outer membrane protein Pal. They form a network linking the inner and outer membranes and the peptidoglycan layer.

It is found in the cell inner membrane. Its function is as follows. Part of the Tol-Pal system, which plays a role in outer membrane invagination during cell division and is important for maintaining outer membrane integrity. The sequence is that of Tol-Pal system protein TolR from Pseudomonas aeruginosa (strain ATCC 15692 / DSM 22644 / CIP 104116 / JCM 14847 / LMG 12228 / 1C / PRS 101 / PAO1).